Here is a 429-residue protein sequence, read N- to C-terminus: UDP-N-acetylglucosamine 1-carboxyvinyltransferase (429 aa).

22–23 (KN) lines the phosphoenolpyruvate pocket. Residue arginine 102 coordinates UDP-N-acetyl-alpha-D-glucosamine. Cysteine 126 serves as the catalytic Proton donor. Cysteine 126 carries the 2-(S-cysteinyl)pyruvic acid O-phosphothioketal modification. Residues 131 to 135 (RPVDL), aspartate 316, and isoleucine 338 contribute to the UDP-N-acetyl-alpha-D-glucosamine site.

Belongs to the EPSP synthase family. MurA subfamily.

Its subcellular location is the cytoplasm. The catalysed reaction is phosphoenolpyruvate + UDP-N-acetyl-alpha-D-glucosamine = UDP-N-acetyl-3-O-(1-carboxyvinyl)-alpha-D-glucosamine + phosphate. The protein operates within cell wall biogenesis; peptidoglycan biosynthesis. In terms of biological role, cell wall formation. Adds enolpyruvyl to UDP-N-acetylglucosamine. The polypeptide is UDP-N-acetylglucosamine 1-carboxyvinyltransferase (Rhodopseudomonas palustris (strain BisB18)).